The primary structure comprises 146 residues: Large ribosomal subunit protein bL9 (146 aa).

It belongs to the bacterial ribosomal protein bL9 family.

Functionally, binds to the 23S rRNA. This chain is Large ribosomal subunit protein bL9, found in Flavobacterium johnsoniae (strain ATCC 17061 / DSM 2064 / JCM 8514 / BCRC 14874 / CCUG 350202 / NBRC 14942 / NCIMB 11054 / UW101) (Cytophaga johnsonae).